The chain runs to 146 residues: Cytochrome b5 type B (146 aa).

A propeptide spanning residues 1–11 is cleaved from the precursor; the sequence is MATPEASGSGR. Residues 20 to 96 form the Cytochrome b5 heme-binding domain; sequence VTYYRLEEVA…LKQYYIGDVH (77 aa). N6-acetyllysine is present on K30. Residues H55 and H79 each contribute to the heme site. Position 80 is a phosphoserine (S80). Residues 119–136 form a helical membrane-spanning segment; sequence WAYWIVPIVGAILIGFLY.

This sequence belongs to the cytochrome b5 family. As to quaternary structure, component of a complex composed of cytochrome b5, NADH-cytochrome b5 reductase (CYB5R3) and MTARC2.

The protein resides in the mitochondrion outer membrane. Its function is as follows. Cytochrome b5 is a membrane-bound hemoprotein functioning as an electron carrier for several membrane-bound oxygenases. The sequence is that of Cytochrome b5 type B (Cyb5b) from Rattus norvegicus (Rat).